Here is a 362-residue protein sequence, read N- to C-terminus: Serine/threonine-protein kinase ZRK4 (362 aa).

The tract at residues 1–23 is disordered; the sequence is MNDQKMSCWRKKSKKKNSEANQR. One can recognise a Protein kinase domain in the interval 35–362; sequence LEDLIELCNG…KELKRIERWT (328 aa). ATP-binding positions include 41 to 49 and lysine 89; that span reads LCNGKSNPI. The active-site Proton acceptor is aspartate 185.

Belongs to the protein kinase superfamily. Ser/Thr protein kinase family. ZRK subfamily.

It carries out the reaction L-seryl-[protein] + ATP = O-phospho-L-seryl-[protein] + ADP + H(+). It catalyses the reaction L-threonyl-[protein] + ATP = O-phospho-L-threonyl-[protein] + ADP + H(+). The polypeptide is Serine/threonine-protein kinase ZRK4 (Arabidopsis thaliana (Mouse-ear cress)).